A 580-amino-acid chain; its full sequence is MKASQSFLATLKEAPSDAEVVSHKLMVRAGLIRKLSAGVYNYLPLGLKVIRKVENIIREEMNRAGAIELLMPMIQPAELWQETGRWEKMGPELLRIKDRHDRDFLIQPTSEEVVTDLARNEIKSYKQLPVNFYQIQTKFRDERRPRFGIMRGREFSMKDAYSFDRDTEGLKKSYQIMFDAYTRIFKRMGLQFRAVTADNGAIGGSGSQEFHVIADTGEDAIVYCPDSDYAANLEAAESLALIASRAAASVAMAKVPTPDKTNCADVAKFLNIPIESTVKSLLFVADQENGPAKLFMLLVRGDHELNEVKASKIPGMAESRFASEAEIKLACNAPAGYLGPVGVSADATVVADRTVANMADFVCGANDAGHHLTGVNWGRDLPEPLVLDIRNAVVGDPSPDGKGVVDICRGIEVGHVFQLGTRYSEAMGCTYLDQQGKAQPMVMGCYGIGVTRLLGAAIEQGHDEKGIIWPISMAPCEVVICPMGYEKSEAVKAACDQLHDGLLAAGVDVILDDRNERPGAMFADWGLIGAPFRVVIGDRGLVDSQVEFKGRTDAESQNIPLTQIKEKVIAAIQTTKQSIV.

It belongs to the class-II aminoacyl-tRNA synthetase family. ProS type 1 subfamily. As to quaternary structure, homodimer.

The protein resides in the cytoplasm. It catalyses the reaction tRNA(Pro) + L-proline + ATP = L-prolyl-tRNA(Pro) + AMP + diphosphate. Functionally, catalyzes the attachment of proline to tRNA(Pro) in a two-step reaction: proline is first activated by ATP to form Pro-AMP and then transferred to the acceptor end of tRNA(Pro). As ProRS can inadvertently accommodate and process non-cognate amino acids such as alanine and cysteine, to avoid such errors it has two additional distinct editing activities against alanine. One activity is designated as 'pretransfer' editing and involves the tRNA(Pro)-independent hydrolysis of activated Ala-AMP. The other activity is designated 'posttransfer' editing and involves deacylation of mischarged Ala-tRNA(Pro). The misacylated Cys-tRNA(Pro) is not edited by ProRS. The sequence is that of Proline--tRNA ligase from Polynucleobacter necessarius subsp. necessarius (strain STIR1).